A 262-amino-acid polypeptide reads, in one-letter code: Caffeyl-CoA reductase-Etf complex subunit CarD (262 aa).

It belongs to the ETF beta-subunit/FixA family. As to quaternary structure, part of the homotrimeric caffeyl-CoA reductase-Etf complex composed of (R)-2-hydroxyisocaproyl-CoA dehydratase CarC, and the electron transfer flavoprotein (ETF) alpha (CarE) and beta (CarD) subunits. Requires FAD as cofactor. AMP is required as a cofactor.

Its subcellular location is the cytoplasm. It carries out the reaction hydrocaffeoyl-CoA + 2 reduced [2Fe-2S]-[ferredoxin] + 2 NAD(+) = (E)-caffeoyl-CoA + 2 oxidized [2Fe-2S]-[ferredoxin] + 2 NADH. Caffeyl-CoA reductase-Etf complex catalyzes the reduction of caffeyl-CoA to yield hydrocaffeyl-CoA. It couples the endergonic ferredoxin reduction with NADH as reductant to the exergonic reduction of caffeoyl-CoA with the same reductant. It uses the mechanism of electron bifurcation to overcome the steep energy barrier in ferredoxin reduction. The electron transfer flavoprotein (Etf) mediates the electron transfer between the different donors and acceptors. The complex can also reduce 4-coumaroyl-CoA and feruloyl-CoA. This is Caffeyl-CoA reductase-Etf complex subunit CarD from Acetobacterium woodii (strain ATCC 29683 / DSM 1030 / JCM 2381 / KCTC 1655 / WB1).